We begin with the raw amino-acid sequence, 179 residues long: NADH-quinone oxidoreductase subunit B (179 aa).

4 residues coordinate [4Fe-4S] cluster: Cys-53, Cys-54, Cys-118, and Cys-148.

It belongs to the complex I 20 kDa subunit family. As to quaternary structure, NDH-1 is composed of 14 different subunits. Subunits NuoB, C, D, E, F, and G constitute the peripheral sector of the complex. [4Fe-4S] cluster serves as cofactor.

The protein localises to the cell membrane. It catalyses the reaction a quinone + NADH + 5 H(+)(in) = a quinol + NAD(+) + 4 H(+)(out). Functionally, NDH-1 shuttles electrons from NADH, via FMN and iron-sulfur (Fe-S) centers, to quinones in the respiratory chain. The immediate electron acceptor for the enzyme in this species is believed to be a menaquinone. Couples the redox reaction to proton translocation (for every two electrons transferred, four hydrogen ions are translocated across the cytoplasmic membrane), and thus conserves the redox energy in a proton gradient. This Bacillus thuringiensis (strain Al Hakam) protein is NADH-quinone oxidoreductase subunit B.